A 457-amino-acid polypeptide reads, in one-letter code: Allantoinase (457 aa).

Zn(2+) is bound by residues histidine 58, histidine 60, lysine 145, histidine 181, histidine 237, and aspartate 310. N6-carboxylysine is present on lysine 145.

It belongs to the metallo-dependent hydrolases superfamily. Allantoinase family. Homotetramer. The cofactor is Zn(2+). Carboxylation allows a single lysine to coordinate two zinc ions.

The enzyme catalyses (S)-allantoin + H2O = allantoate + H(+). The protein operates within nitrogen metabolism; (S)-allantoin degradation; allantoate from (S)-allantoin: step 1/1. Catalyzes the conversion of allantoin (5-ureidohydantoin) to allantoic acid by hydrolytic cleavage of the five-member hydantoin ring. The protein is Allantoinase of Solibacter usitatus (strain Ellin6076).